Reading from the N-terminus, the 582-residue chain is Max-binding protein MNT (582 aa).

Position 2 is an N-acetylserine (S2). The disordered stretch occupies residues Q18 to V224. The segment covering R22–K42 has biased composition (basic and acidic residues). Composition is skewed to pro residues over residues E61–T82 and Q99–P108. Over residues A109–L123 the composition is skewed to low complexity. Composition is skewed to pro residues over residues A135–L149 and N160–T171. The segment covering P203–K214 has biased composition (basic and acidic residues). Residues G220–L271 form the bHLH domain. Residues L271–L299 form a leucine-zipper region. The interval T319–T422 is disordered. The span at E334–E345 shows a compositional bias: acidic residues. Residues L368–H381 are compositionally biased toward pro residues. Positions H387 to P408 are enriched in low complexity. Over residues L409–A418 the composition is skewed to pro residues.

Efficient DNA binding requires dimerization with another bHLH protein. Binds DNA as a homodimer or a heterodimer with MAX.

The protein resides in the nucleus. Binds DNA as a heterodimer with MAX and represses transcription. Binds to the canonical E box sequence 5'-CACGTG-3' and, with higher affinity, to 5'-CACGCG-3'. In Homo sapiens (Human), this protein is Max-binding protein MNT (MNT).